The primary structure comprises 546 residues: Chaperonin GroEL 1 (546 aa).

ATP contacts are provided by residues 30 to 33 (TLGP), lysine 51, 87 to 91 (DGTTT), glycine 415, 479 to 481 (NAA), and aspartate 495.

This sequence belongs to the chaperonin (HSP60) family. Forms a cylinder of 14 subunits composed of two heptameric rings stacked back-to-back. Interacts with the co-chaperonin GroES.

It is found in the cytoplasm. It catalyses the reaction ATP + H2O + a folded polypeptide = ADP + phosphate + an unfolded polypeptide.. Its function is as follows. Together with its co-chaperonin GroES, plays an essential role in assisting protein folding. The GroEL-GroES system forms a nano-cage that allows encapsulation of the non-native substrate proteins and provides a physical environment optimized to promote and accelerate protein folding. The chain is Chaperonin GroEL 1 from Vibrio vulnificus (strain CMCP6).